A 570-amino-acid polypeptide reads, in one-letter code: Urease subunit alpha 1 (570 aa).

The Urease domain maps to 131–570 (GGIDTHVHFI…VPMAQRYFLF (440 aa)). Positions 136, 138, and 219 each coordinate Ni(2+). Lys-219 is modified (N6-carboxylysine). Residue His-221 coordinates substrate. 2 residues coordinate Ni(2+): His-248 and His-274. His-322 (proton donor) is an active-site residue. Residue Asp-362 coordinates Ni(2+).

This sequence belongs to the metallo-dependent hydrolases superfamily. Urease alpha subunit family. In terms of assembly, heterotrimer of UreA (gamma), UreB (beta) and UreC (alpha) subunits. Three heterotrimers associate to form the active enzyme. Requires Ni cation as cofactor. Post-translationally, carboxylation allows a single lysine to coordinate two nickel ions.

It localises to the cytoplasm. The enzyme catalyses urea + 2 H2O + H(+) = hydrogencarbonate + 2 NH4(+). The protein operates within nitrogen metabolism; urea degradation; CO(2) and NH(3) from urea (urease route): step 1/1. This is Urease subunit alpha 1 from Brucella melitensis biotype 1 (strain ATCC 23456 / CCUG 17765 / NCTC 10094 / 16M).